The primary structure comprises 328 residues: 3-ketodihydrosphingosine reductase TSC10 (328 aa).

An NADP(+)-binding site is contributed by Leu-16. NADPH contacts are provided by Gly-19, Ser-21, and Gly-23. Positions 19-23 (GASQG) match the GXSXG motif. Leu-24 provides a ligand contact to NADP(+). Residues Arg-44, Lys-48, and Asp-73 each contribute to the NADPH site. Residue Asp-73 participates in NADP(+) binding. Residue Ser-161 is the Proton donor of the active site. Positions 175, 179, and 210 each coordinate NADP(+). Tyr-175 acts as the Proton acceptor in catalysis. Lys-179 acts as the Lowers pKa of active site Tyr in catalysis. A helical membrane pass occupies residues 277–297 (FFQVIVSFIFSIIAPIANYVV).

The protein belongs to the short-chain dehydrogenases/reductases (SDR) family.

It localises to the endoplasmic reticulum membrane. The catalysed reaction is sphinganine + NADP(+) = 3-oxosphinganine + NADPH + H(+). It participates in lipid metabolism; sphingolipid metabolism. Functionally, catalyzes the reduction of 3'-oxosphinganine (3-ketodihydrosphingosine/KDS) to sphinganine (dihydrosphingosine/DHS), the second step of de novo sphingolipid biosynthesis. The sequence is that of 3-ketodihydrosphingosine reductase TSC10 (TSC10) from Debaryomyces hansenii (strain ATCC 36239 / CBS 767 / BCRC 21394 / JCM 1990 / NBRC 0083 / IGC 2968) (Yeast).